The following is a 281-amino-acid chain: Shikimate dehydrogenase (NADP(+)) (281 aa).

Shikimate-binding positions include 14 to 16 and T61; that span reads SKS. K65 (proton acceptor) is an active-site residue. The shikimate site is built by N86 and D105. NADP(+)-binding positions include 130–134, 154–159, and M221; these read GAGGA and NRTAAK. Residue Y223 participates in shikimate binding. NADP(+) is bound at residue G245.

The protein belongs to the shikimate dehydrogenase family. As to quaternary structure, homodimer.

It catalyses the reaction shikimate + NADP(+) = 3-dehydroshikimate + NADPH + H(+). Its pathway is metabolic intermediate biosynthesis; chorismate biosynthesis; chorismate from D-erythrose 4-phosphate and phosphoenolpyruvate: step 4/7. Its function is as follows. Involved in the biosynthesis of the chorismate, which leads to the biosynthesis of aromatic amino acids. Catalyzes the reversible NADPH linked reduction of 3-dehydroshikimate (DHSA) to yield shikimate (SA). The chain is Shikimate dehydrogenase (NADP(+)) from Azoarcus sp. (strain BH72).